A 288-amino-acid polypeptide reads, in one-letter code: ATP synthase gamma chain (288 aa).

The protein belongs to the ATPase gamma chain family. In terms of assembly, F-type ATPases have 2 components, CF(1) - the catalytic core - and CF(0) - the membrane proton channel. CF(1) has five subunits: alpha(3), beta(3), gamma(1), delta(1), epsilon(1). CF(0) has three main subunits: a, b and c.

The protein localises to the cell inner membrane. Produces ATP from ADP in the presence of a proton gradient across the membrane. The gamma chain is believed to be important in regulating ATPase activity and the flow of protons through the CF(0) complex. The protein is ATP synthase gamma chain of Paracidovorax citrulli (strain AAC00-1) (Acidovorax citrulli).